A 336-amino-acid chain; its full sequence is Biotin synthase (336 aa).

In terms of domain architecture, Radical SAM core spans 54–281 (NAIQLSTLLS…KAMVRLSAGR (228 aa)). Positions 69, 73, and 76 each coordinate [4Fe-4S] cluster. Residues cysteine 113, cysteine 144, cysteine 204, and arginine 276 each coordinate [2Fe-2S] cluster.

This sequence belongs to the radical SAM superfamily. Biotin synthase family. In terms of assembly, homodimer. [4Fe-4S] cluster serves as cofactor. The cofactor is [2Fe-2S] cluster.

It catalyses the reaction (4R,5S)-dethiobiotin + (sulfur carrier)-SH + 2 reduced [2Fe-2S]-[ferredoxin] + 2 S-adenosyl-L-methionine = (sulfur carrier)-H + biotin + 2 5'-deoxyadenosine + 2 L-methionine + 2 oxidized [2Fe-2S]-[ferredoxin]. The protein operates within cofactor biosynthesis; biotin biosynthesis; biotin from 7,8-diaminononanoate: step 2/2. Functionally, catalyzes the conversion of dethiobiotin (DTB) to biotin by the insertion of a sulfur atom into dethiobiotin via a radical-based mechanism. This is Biotin synthase from Burkholderia pseudomallei (strain 1106a).